The chain runs to 110 residues: Phosphoribosyl-AMP cyclohydrolase (110 aa).

Asp-80 contributes to the Mg(2+) binding site. Cys-81 contributes to the Zn(2+) binding site. Mg(2+) contacts are provided by Asp-82 and Asp-84. Zn(2+)-binding residues include Cys-97 and Cys-104.

It belongs to the PRA-CH family. As to quaternary structure, homodimer. Mg(2+) is required as a cofactor. It depends on Zn(2+) as a cofactor.

It is found in the cytoplasm. It carries out the reaction 1-(5-phospho-beta-D-ribosyl)-5'-AMP + H2O = 1-(5-phospho-beta-D-ribosyl)-5-[(5-phospho-beta-D-ribosylamino)methylideneamino]imidazole-4-carboxamide. It functions in the pathway amino-acid biosynthesis; L-histidine biosynthesis; L-histidine from 5-phospho-alpha-D-ribose 1-diphosphate: step 3/9. In terms of biological role, catalyzes the hydrolysis of the adenine ring of phosphoribosyl-AMP. This is Phosphoribosyl-AMP cyclohydrolase from Clostridium botulinum (strain Kyoto / Type A2).